Here is a 103-residue protein sequence, read N- to C-terminus: Co-chaperonin GroES (103 aa).

This sequence belongs to the GroES chaperonin family. As to quaternary structure, heptamer of 7 subunits arranged in a ring. Interacts with the chaperonin GroEL.

The protein localises to the cytoplasm. In terms of biological role, together with the chaperonin GroEL, plays an essential role in assisting protein folding. The GroEL-GroES system forms a nano-cage that allows encapsulation of the non-native substrate proteins and provides a physical environment optimized to promote and accelerate protein folding. GroES binds to the apical surface of the GroEL ring, thereby capping the opening of the GroEL channel. This chain is Co-chaperonin GroES, found in Synechococcus sp. (strain WH7803).